The following is a 197-amino-acid chain: Autophagy-related protein 33 (197 aa).

The next 3 helical transmembrane spans lie at 10–30 (GIAVSSIGLYSGLLASASLIT), 52–72 (AATALGAFASTFFCVSFFGAP), and 78–98 (PYLLYGMLVAPLSSFVLGCAS). S127 and S129 each carry phosphoserine. Over residues 135-148 (EDNHASENTPRDGK) the composition is skewed to basic and acidic residues. Residues 135–154 (EDNHASENTPRDGKPAATTV) form a disordered region. The helical transmembrane segment at 172–192 (LIAATAIAIVGFVQAVIGVYG) threads the bilayer.

This sequence belongs to the ATG33 family.

Its subcellular location is the mitochondrion membrane. In terms of biological role, involved in the selective degradation of mitochondria via autophagy during starvation and at post-log phase. This chain is Autophagy-related protein 33 (ATG33), found in Saccharomyces cerevisiae (strain ATCC 204508 / S288c) (Baker's yeast).